The sequence spans 209 residues: Uracil phosphoribosyltransferase (209 aa).

Residues arginine 79, arginine 104, and 131–139 (DPMLATGGS) each bind 5-phospho-alpha-D-ribose 1-diphosphate. Uracil-binding positions include isoleucine 194 and 199 to 201 (GDA). 5-phospho-alpha-D-ribose 1-diphosphate is bound at residue aspartate 200.

Belongs to the UPRTase family. The cofactor is Mg(2+).

It carries out the reaction UMP + diphosphate = 5-phospho-alpha-D-ribose 1-diphosphate + uracil. The protein operates within pyrimidine metabolism; UMP biosynthesis via salvage pathway; UMP from uracil: step 1/1. Allosterically activated by GTP. Catalyzes the conversion of uracil and 5-phospho-alpha-D-ribose 1-diphosphate (PRPP) to UMP and diphosphate. This is Uracil phosphoribosyltransferase from Clostridium perfringens (strain SM101 / Type A).